The sequence spans 281 residues: DegV domain-containing protein DR_1986 (281 aa).

The DegV domain maps to 3–278; sequence IAIVTDSTSD…PGAVGVALEP (276 aa). Hexadecanoate-binding residues include Thr-61 and Ser-93.

Functionally, may bind long-chain fatty acids, such as palmitate, and may play a role in lipid transport or fatty acid metabolism. In Deinococcus radiodurans (strain ATCC 13939 / DSM 20539 / JCM 16871 / CCUG 27074 / LMG 4051 / NBRC 15346 / NCIMB 9279 / VKM B-1422 / R1), this protein is DegV domain-containing protein DR_1986.